The chain runs to 99 residues: MSRGHQTQEVRRVRTPRRGEIPGVVEQIMGHGKLKVRCADGHIRLGRIPGKMKKRIWIREGDVVLVKPWEFQSEEKADIVWRYTRTESNWLERKGYLKL.

Positions 11–84 (RRVRTPRRGE…EKADIVWRYT (74 aa)) constitute an S1-like domain.

It belongs to the eIF-1A family.

Seems to be required for maximal rate of protein biosynthesis. Enhances ribosome dissociation into subunits and stabilizes the binding of the initiator Met-tRNA(I) to 40 S ribosomal subunits. This is Translation initiation factor 1A (eIF1A) from Methanothermobacter thermautotrophicus (strain ATCC 29096 / DSM 1053 / JCM 10044 / NBRC 100330 / Delta H) (Methanobacterium thermoautotrophicum).